A 413-amino-acid polypeptide reads, in one-letter code: Glucose-1-phosphate adenylyltransferase (413 aa).

Alpha-D-glucose 1-phosphate-binding positions include Tyr102, Gly167, 182–183 (EK), and Ser200.

This sequence belongs to the bacterial/plant glucose-1-phosphate adenylyltransferase family. In terms of assembly, homotetramer.

It carries out the reaction alpha-D-glucose 1-phosphate + ATP + H(+) = ADP-alpha-D-glucose + diphosphate. Its pathway is glycan biosynthesis; glycogen biosynthesis. Its function is as follows. Involved in the biosynthesis of ADP-glucose, a building block required for the elongation reactions to produce glycogen. Catalyzes the reaction between ATP and alpha-D-glucose 1-phosphate (G1P) to produce pyrophosphate and ADP-Glc. The polypeptide is Glucose-1-phosphate adenylyltransferase (Deinococcus radiodurans (strain ATCC 13939 / DSM 20539 / JCM 16871 / CCUG 27074 / LMG 4051 / NBRC 15346 / NCIMB 9279 / VKM B-1422 / R1)).